The following is an 831-amino-acid chain: Probable glucan 1,3-beta-glucosidase D (831 aa).

6 stretches are compositionally biased toward basic and acidic residues: residues methionine 1–valine 24, arginine 44–glutamate 56, arginine 79–alanine 93, serine 102–arginine 115, arginine 137–alanine 151, and glutamine 198–lysine 213. 2 disordered regions span residues methionine 1 to histidine 179 and histidine 192 to lysine 241. Residues methionine 1–lysine 297 lie on the Cytoplasmic side of the membrane. A helical; Signal-anchor for type II membrane protein membrane pass occupies residues tryptophan 298 to valine 318. At methionine 319–tyrosine 831 the chain is on the extracellular side. N-linked (GlcNAc...) asparagine glycans are attached at residues asparagine 376, asparagine 381, asparagine 393, asparagine 410, asparagine 442, asparagine 546, and asparagine 558. The active-site Proton donor is the glutamate 597. 4 N-linked (GlcNAc...) asparagine glycosylation sites follow: asparagine 610, asparagine 636, asparagine 669, and asparagine 689. The active-site Nucleophile is glutamate 702.

It belongs to the glycosyl hydrolase 5 (cellulase A) family.

The protein localises to the cell membrane. It carries out the reaction Successive hydrolysis of beta-D-glucose units from the non-reducing ends of (1-&gt;3)-beta-D-glucans, releasing alpha-glucose.. In terms of biological role, glucosidase involved in the degradation of cellulosic biomass. Active on lichenan. The polypeptide is Probable glucan 1,3-beta-glucosidase D (exgD) (Aspergillus flavus (strain ATCC 200026 / FGSC A1120 / IAM 13836 / NRRL 3357 / JCM 12722 / SRRC 167)).